The chain runs to 202 residues: MADS-box transcription factor 33 (202 aa).

One can recognise an MADS-box domain in the interval 1–61; sequence MVRGKVQMRR…GKLHELATNG (61 aa). In terms of domain architecture, K-box spans 87-177; the sequence is QQVAEQGIFL…QEKVKEQQKL (91 aa).

In terms of tissue distribution, expressed in seedling roots.

The protein resides in the nucleus. Its function is as follows. Probable transcription factor. This chain is MADS-box transcription factor 33 (MADS33), found in Oryza sativa subsp. japonica (Rice).